A 450-amino-acid polypeptide reads, in one-letter code: ATP-dependent protease ATPase subunit HslU (450 aa).

ATP contacts are provided by residues valine 29, glycine 71–glutamate 76, aspartate 261, glutamate 328, and arginine 400.

The protein belongs to the ClpX chaperone family. HslU subfamily. As to quaternary structure, a double ring-shaped homohexamer of HslV is capped on each side by a ring-shaped HslU homohexamer. The assembly of the HslU/HslV complex is dependent on binding of ATP.

It is found in the cytoplasm. ATPase subunit of a proteasome-like degradation complex; this subunit has chaperone activity. The binding of ATP and its subsequent hydrolysis by HslU are essential for unfolding of protein substrates subsequently hydrolyzed by HslV. HslU recognizes the N-terminal part of its protein substrates and unfolds these before they are guided to HslV for hydrolysis. The polypeptide is ATP-dependent protease ATPase subunit HslU (Rickettsia conorii (strain ATCC VR-613 / Malish 7)).